The following is a 719-amino-acid chain: Anaphase-promoting complex subunit 4 (719 aa).

Residues 57–96 form a WD repeat; that stretch reads NSQRIWDVDFHDLEATELCWNHDGNLIVVGFKNGELKIID.

In terms of assembly, the APC/C is composed of at least 13 subunits: apc1, apc2, nuc2, apc4, apc5, cut9, apc8, apc10, apc11, hcn1, apc13, apc14 and apc15. Interacts with apc1 and dim1.

In terms of biological role, component of the anaphase-promoting complex/cyclosome (APC/C), a cell cycle-regulated E3 ubiquitin-protein ligase complex that controls progression through mitosis and the G1 phase of the cell cycle. The APC/C is thought to confer substrate specificity and, in the presence of ubiquitin-conjugating E2 enzymes, it catalyzes the formation of protein-ubiquitin conjugates that are subsequently degraded by the 26S proteasome. Has a role in promoting metaphase to anaphase transition via the ubiquitination of specific mitotic substrates. The sequence is that of Anaphase-promoting complex subunit 4 (cut20) from Schizosaccharomyces pombe (strain 972 / ATCC 24843) (Fission yeast).